Reading from the N-terminus, the 437-residue chain is Phosphomethylpyrimidine synthase (437 aa).

Residues Asn-69, Met-98, Tyr-127, His-163, 185 to 187 (SRG), 226 to 229 (DACR), and Glu-265 each bind substrate. A Zn(2+)-binding site is contributed by His-269. A substrate-binding site is contributed by Tyr-292. His-333 contributes to the Zn(2+) binding site. [4Fe-4S] cluster-binding residues include Cys-409, Cys-412, and Cys-416.

The protein belongs to the ThiC family. The cofactor is [4Fe-4S] cluster.

It catalyses the reaction 5-amino-1-(5-phospho-beta-D-ribosyl)imidazole + S-adenosyl-L-methionine = 4-amino-2-methyl-5-(phosphooxymethyl)pyrimidine + CO + 5'-deoxyadenosine + formate + L-methionine + 3 H(+). The protein operates within cofactor biosynthesis; thiamine diphosphate biosynthesis. Its function is as follows. Catalyzes the synthesis of the hydroxymethylpyrimidine phosphate (HMP-P) moiety of thiamine from aminoimidazole ribotide (AIR) in a radical S-adenosyl-L-methionine (SAM)-dependent reaction. This chain is Phosphomethylpyrimidine synthase, found in Clostridium botulinum (strain Okra / Type B1).